The chain runs to 222 residues: Peptidyl-prolyl cis-trans isomerase FKBP7 (222 aa).

A signal peptide spans 1–23 (MPKTMHFLFRFIVFFYLWGLFTA). Asn-45 is a glycosylation site (N-linked (GlcNAc...) asparagine). In terms of domain architecture, PPIase FKBP-type spans 53-145 (GDLLNAHYDG…IFEIELYAVT (93 aa)). EF-hand domains follow at residues 145-180 (TKGPRSTETFKQIDMDSDRQLSKAEINLYLQREFEK) and 189-222 (YQDAVLEDIFKKNDHDGDGFISPKEYNVYQHDEL). Ca(2+)-binding residues include Asp-158, Asp-160, Asp-162, Gln-164, Glu-169, Asp-202, Asp-204, Asp-206, and Glu-213. A Prevents secretion from ER motif is present at residues 219 to 222 (HDEL).

Post-translationally, glycosylated.

It localises to the endoplasmic reticulum lumen. It catalyses the reaction [protein]-peptidylproline (omega=180) = [protein]-peptidylproline (omega=0). In terms of biological role, PPIases accelerate the folding of proteins during protein synthesis. The sequence is that of Peptidyl-prolyl cis-trans isomerase FKBP7 (FKBP7) from Pongo abelii (Sumatran orangutan).